The chain runs to 104 residues: Cell division protein FtsL (104 aa).

Topologically, residues 1–20 are cytoplasmic; sequence MSKPSLTLPRIVLHDLWQHK. The chain crosses the membrane as a helical span at residues 21–43; it reads WILLLALLVLSNAVAVVYTSHVS. Residues 44–104 are Periplasmic-facing; it reads RKLTTEWDQL…PSEEIVVKVP (61 aa).

This sequence belongs to the FtsL family. Part of a complex composed of FtsB, FtsL and FtsQ.

Its subcellular location is the cell inner membrane. Its function is as follows. Essential cell division protein. May link together the upstream cell division proteins, which are predominantly cytoplasmic, with the downstream cell division proteins, which are predominantly periplasmic. This is Cell division protein FtsL from Shewanella oneidensis (strain ATCC 700550 / JCM 31522 / CIP 106686 / LMG 19005 / NCIMB 14063 / MR-1).